A 294-amino-acid chain; its full sequence is Nucleotide-binding protein Dtur_1129 (294 aa).

Residue G10–S17 participates in ATP binding. Residue D61 to T64 coordinates GTP.

Belongs to the RapZ-like family.

Displays ATPase and GTPase activities. The polypeptide is Nucleotide-binding protein Dtur_1129 (Dictyoglomus turgidum (strain DSM 6724 / Z-1310)).